Reading from the N-terminus, the 396-residue chain is NADH-quinone oxidoreductase subunit D (396 aa).

Belongs to the complex I 49 kDa subunit family. NDH-1 is composed of 14 different subunits. Subunits NuoB, C, D, E, F, and G constitute the peripheral sector of the complex.

The protein localises to the cell inner membrane. The enzyme catalyses a quinone + NADH + 5 H(+)(in) = a quinol + NAD(+) + 4 H(+)(out). Functionally, NDH-1 shuttles electrons from NADH, via FMN and iron-sulfur (Fe-S) centers, to quinones in the respiratory chain. The immediate electron acceptor for the enzyme in this species is believed to be ubiquinone. Couples the redox reaction to proton translocation (for every two electrons transferred, four hydrogen ions are translocated across the cytoplasmic membrane), and thus conserves the redox energy in a proton gradient. The sequence is that of NADH-quinone oxidoreductase subunit D from Bartonella quintana (strain Toulouse) (Rochalimaea quintana).